Consider the following 274-residue polypeptide: Large ribosomal subunit protein uL2 (274 aa).

Residues 224–274 (VAMNPVDHPHGGGEGRTSGGRHPVTPWGIPTKGYKTRRNKRSNKLIVQKRK) are disordered. Basic residues predominate over residues 257 to 274 (YKTRRNKRSNKLIVQKRK).

It belongs to the universal ribosomal protein uL2 family. In terms of assembly, part of the 50S ribosomal subunit. Forms a bridge to the 30S subunit in the 70S ribosome.

In terms of biological role, one of the primary rRNA binding proteins. Required for association of the 30S and 50S subunits to form the 70S ribosome, for tRNA binding and peptide bond formation. It has been suggested to have peptidyltransferase activity; this is somewhat controversial. Makes several contacts with the 16S rRNA in the 70S ribosome. The sequence is that of Large ribosomal subunit protein uL2 from Francisella tularensis subsp. holarctica (strain FTNF002-00 / FTA).